A 305-amino-acid polypeptide reads, in one-letter code: Glycine--tRNA ligase alpha subunit (305 aa).

Belongs to the class-II aminoacyl-tRNA synthetase family. Tetramer of two alpha and two beta subunits.

The protein localises to the cytoplasm. The catalysed reaction is tRNA(Gly) + glycine + ATP = glycyl-tRNA(Gly) + AMP + diphosphate. This Streptococcus pyogenes serotype M2 (strain MGAS10270) protein is Glycine--tRNA ligase alpha subunit.